Consider the following 208-residue polypeptide: Platelet glycoprotein Ib beta chain (208 aa).

The first 26 residues, 1 to 26, serve as a signal peptide directing secretion; sequence MGSGPRGAVSLLLLMLAPPSCPAADC. 2 disulfides stabilise this stretch: Cys26–Cys32 and Cys30–Cys39. One can recognise an LRRNT domain in the interval 27-55; it reads PAPCSCAGTLVDCGRRGLTWASLPTSFPV. The Extracellular segment spans residues 27 to 147; the sequence is PAPCSCAGTL…RAACAPGPLC (121 aa). The stretch at 60–83 is one LRR repeat; the sequence is LVLTGNNLTALPSGLLDALPAVRT. An N-linked (GlcNAc...) asparagine glycan is attached at Asn66. The 55-residue stretch at 89–143 folds into the LRRCT domain; that stretch reads NPWRCDCRLVPLRAWLAGRPERAPYRDLRCVAPPAVRGRLLPYLAEDDVRAACAP. 2 disulfides stabilise this stretch: Cys93–Cys118 and Cys95–Cys141. A helical membrane pass occupies residues 148 to 172; it reads WGALAAELALLGLGLLHALLLVLLL. Residues 173–208 lie on the Cytoplasmic side of the membrane; it reads CRLRRLRARARARARAALRLSLTDPLVAEQDGTDES. Phosphoserine; by PKA is present on Ser193. Phosphothreonine is present on Thr195.

Two GP-Ib beta are disulfide-linked to one GP-Ib alpha. GP-IX is complexed with the GP-Ib heterodimer via a non covalent linkage. Interacts with TRAF4.

The protein resides in the membrane. Functionally, gp-Ib, a surface membrane protein of platelets, participates in the formation of platelet plugs by binding to von Willebrand factor, which is already bound to the subendothelium. This is Platelet glycoprotein Ib beta chain (GP1BB) from Papio cynocephalus (Yellow baboon).